The chain runs to 325 residues: Glutaminase (325 aa).

Residues Ser76, Asn125, Glu169, Asn176, Tyr200, Tyr252, and Val270 each coordinate substrate.

Belongs to the glutaminase family. As to quaternary structure, homotetramer.

The enzyme catalyses L-glutamine + H2O = L-glutamate + NH4(+). The polypeptide is Glutaminase (Clavibacter michiganensis subsp. michiganensis (strain NCPPB 382)).